A 153-amino-acid polypeptide reads, in one-letter code: Regulatory protein RecX (153 aa).

It belongs to the RecX family.

It is found in the cytoplasm. In terms of biological role, modulates RecA activity. This is Regulatory protein RecX from Mannheimia succiniciproducens (strain KCTC 0769BP / MBEL55E).